A 729-amino-acid chain; its full sequence is Fatty acid oxidation complex subunit alpha (729 aa).

The interval 1–189 is enoyl-CoA hydratase/isomerase; it reads MLYQSETLQL…KIGLVDAVVD (189 aa). Asp296 lines the substrate pocket. A 3-hydroxyacyl-CoA dehydrogenase region spans residues 311-729; it reads AAPKLAAVLG…LLDVSTNQPA (419 aa). NAD(+)-binding positions include Met324, Asp343, 400–402, Lys407, and Ser429; that span reads VVE. His450 acts as the For 3-hydroxyacyl-CoA dehydrogenase activity in catalysis. Asn453 is a binding site for NAD(+). Substrate is bound by residues Asn500 and Tyr660.

This sequence in the N-terminal section; belongs to the enoyl-CoA hydratase/isomerase family. In the C-terminal section; belongs to the 3-hydroxyacyl-CoA dehydrogenase family. As to quaternary structure, heterotetramer of two alpha chains (FadB) and two beta chains (FadA).

The enzyme catalyses a (3S)-3-hydroxyacyl-CoA + NAD(+) = a 3-oxoacyl-CoA + NADH + H(+). It catalyses the reaction a (3S)-3-hydroxyacyl-CoA = a (2E)-enoyl-CoA + H2O. It carries out the reaction a 4-saturated-(3S)-3-hydroxyacyl-CoA = a (3E)-enoyl-CoA + H2O. The catalysed reaction is (3S)-3-hydroxybutanoyl-CoA = (3R)-3-hydroxybutanoyl-CoA. The enzyme catalyses a (3Z)-enoyl-CoA = a 4-saturated (2E)-enoyl-CoA. It catalyses the reaction a (3E)-enoyl-CoA = a 4-saturated (2E)-enoyl-CoA. It functions in the pathway lipid metabolism; fatty acid beta-oxidation. In terms of biological role, involved in the aerobic and anaerobic degradation of long-chain fatty acids via beta-oxidation cycle. Catalyzes the formation of 3-oxoacyl-CoA from enoyl-CoA via L-3-hydroxyacyl-CoA. It can also use D-3-hydroxyacyl-CoA and cis-3-enoyl-CoA as substrate. This Yersinia pseudotuberculosis serotype IB (strain PB1/+) protein is Fatty acid oxidation complex subunit alpha.